The sequence spans 264 residues: 4-hydroxy-tetrahydrodipicolinate reductase (264 aa).

NAD(+) is bound at residue 10–15 (GCLGRQ). Residue Arg-37 coordinates NADP(+). NAD(+) is bound by residues 99–101 (GTT) and 121–124 (SANL). His-153 serves as the catalytic Proton donor/acceptor. A (S)-2,3,4,5-tetrahydrodipicolinate-binding site is contributed by His-154. The active-site Proton donor is the Lys-157. Residue 163-164 (GT) participates in (S)-2,3,4,5-tetrahydrodipicolinate binding.

It belongs to the DapB family.

Its subcellular location is the cytoplasm. The catalysed reaction is (S)-2,3,4,5-tetrahydrodipicolinate + NAD(+) + H2O = (2S,4S)-4-hydroxy-2,3,4,5-tetrahydrodipicolinate + NADH + H(+). It carries out the reaction (S)-2,3,4,5-tetrahydrodipicolinate + NADP(+) + H2O = (2S,4S)-4-hydroxy-2,3,4,5-tetrahydrodipicolinate + NADPH + H(+). It participates in amino-acid biosynthesis; L-lysine biosynthesis via DAP pathway; (S)-tetrahydrodipicolinate from L-aspartate: step 4/4. Functionally, catalyzes the conversion of 4-hydroxy-tetrahydrodipicolinate (HTPA) to tetrahydrodipicolinate. The polypeptide is 4-hydroxy-tetrahydrodipicolinate reductase (Ehrlichia ruminantium (strain Gardel)).